The primary structure comprises 719 residues: Fatty acid oxidation complex subunit alpha (719 aa).

The tract at residues 1–190 (MIYQGNRITV…KLGLVDAVVA (190 aa)) is enoyl-CoA hydratase/isomerase. A substrate-binding site is contributed by Asp-298. Residues 313–719 (HDINEAAVLG…AAGETFYPKA (407 aa)) are 3-hydroxyacyl-CoA dehydrogenase. NAD(+)-binding positions include Met-326, Asp-345, 402 to 404 (VVE), Lys-409, and Ser-431. The active-site For 3-hydroxyacyl-CoA dehydrogenase activity is the His-452. Asn-455 contacts NAD(+). Asn-502 is a substrate binding site.

It in the N-terminal section; belongs to the enoyl-CoA hydratase/isomerase family. In the C-terminal section; belongs to the 3-hydroxyacyl-CoA dehydrogenase family. Heterotetramer of two alpha chains (FadB) and two beta chains (FadA).

The enzyme catalyses a (3S)-3-hydroxyacyl-CoA + NAD(+) = a 3-oxoacyl-CoA + NADH + H(+). It catalyses the reaction a (3S)-3-hydroxyacyl-CoA = a (2E)-enoyl-CoA + H2O. It carries out the reaction a 4-saturated-(3S)-3-hydroxyacyl-CoA = a (3E)-enoyl-CoA + H2O. The catalysed reaction is (3S)-3-hydroxybutanoyl-CoA = (3R)-3-hydroxybutanoyl-CoA. The enzyme catalyses a (3Z)-enoyl-CoA = a 4-saturated (2E)-enoyl-CoA. It catalyses the reaction a (3E)-enoyl-CoA = a 4-saturated (2E)-enoyl-CoA. Its pathway is lipid metabolism; fatty acid beta-oxidation. Involved in the aerobic and anaerobic degradation of long-chain fatty acids via beta-oxidation cycle. Catalyzes the formation of 3-oxoacyl-CoA from enoyl-CoA via L-3-hydroxyacyl-CoA. It can also use D-3-hydroxyacyl-CoA and cis-3-enoyl-CoA as substrate. This Psychrobacter sp. (strain PRwf-1) protein is Fatty acid oxidation complex subunit alpha.